The primary structure comprises 330 residues: RNA polymerase sigma factor RpoS (330 aa).

Residues 56–89 (DATQLYLGEIGYSPLLTAEEEVYFARRALRGDVA) are sigma-70 factor domain-1. The segment at 94–164 (MIESNLRLVV…ERAIMNQTRT (71 aa)) is sigma-70 factor domain-2. An Interaction with polymerase core subunit RpoC motif is present at residues 118 to 121 (DLIE). The tract at residues 174–249 (ELNVYLRTAR…DEKENGPEDT (76 aa)) is sigma-70 factor domain-3. The segment at 262 to 315 (WLFELNAKQREVLARRFGLLGYEAATLEDVGREIGLTRERVRQIQVEGLRRLRE) is sigma-70 factor domain-4. A DNA-binding region (H-T-H motif) is located at residues 288-307 (LEDVGREIGLTRERVRQIQV).

This sequence belongs to the sigma-70 factor family. RpoS subfamily. As to quaternary structure, interacts with the RNA polymerase core enzyme.

The protein localises to the cytoplasm. Functionally, sigma factors are initiation factors that promote the attachment of RNA polymerase to specific initiation sites and are then released. This sigma factor is the master transcriptional regulator of the stationary phase and the general stress response. This Salmonella dublin protein is RNA polymerase sigma factor RpoS.